A 148-amino-acid chain; its full sequence is Probable glycine cleavage system H protein 2 (148 aa).

One can recognise a Lipoyl-binding domain in the interval 32–114; it reads TIVVGITDLA…YGKGWLVKMK (83 aa). Lys-73 carries the N6-lipoyllysine modification.

It belongs to the GcvH family. In terms of assembly, the glycine cleavage system is composed of four proteins: P, T, L and H. Requires (R)-lipoate as cofactor.

Its function is as follows. The glycine cleavage system catalyzes the degradation of glycine. The H protein shuttles the methylamine group of glycine from the P protein to the T protein. The chain is Probable glycine cleavage system H protein 2 from Saccharolobus solfataricus (strain ATCC 35092 / DSM 1617 / JCM 11322 / P2) (Sulfolobus solfataricus).